A 545-amino-acid polypeptide reads, in one-letter code: Afadin- and alpha-actinin-binding protein B (545 aa).

2 coiled-coil regions span residues 106 to 287 and 358 to 442; these read RSKE…SQRK and ARGD…AIRL. The tract at residues 497–545 is disordered; the sequence is HDRHLASSGDHYQRPRKTLPITPSSKHSLTQRESVAWRDSSISPNGTDF. 2 stretches are compositionally biased toward polar residues: residues 517-529 and 536-545; these read ITPSSKHSLTQRE and SSISPNGTDF.

The protein belongs to the ADIP family. Interacts with WRAP73.

The protein resides in the cell junction. It localises to the adherens junction. The protein localises to the cytoplasm. Its subcellular location is the cytoskeleton. It is found in the microtubule organizing center. The protein resides in the centrosome. It localises to the centriolar satellite. In terms of biological role, belongs to an adhesion system, which plays a role in the organization of homotypic, interneuronal and heterotypic cell-cell adherens junctions (AJs). Involved in cell movement. Acts as a centrosome maturation factor, probably by maintaining the integrity of the pericentriolar material and proper microtubule nucleation at mitotic spindle poles. The function seems to implicate at least in part WRAP73; the SSX2IP:WRAP73 complex is proposed to act as regulator of spindle anchoring at the mitotic centrosome. The protein is Afadin- and alpha-actinin-binding protein B (ssx2ip-b) of Xenopus laevis (African clawed frog).